Reading from the N-terminus, the 545-residue chain is Probable intron-encoded endonuclease 4 (545 aa).

7 consecutive transmembrane segments (helical) span residues 1–21 (MYLS…FFGR), 30–50 (LITC…FFEV), 81–101 (LTVA…IYSI), 119–139 (LFTF…MFVG), 140–160 (WEGV…RIAA), 177–197 (FLTI…YATV), and 200–220 (LAPY…LIGA). A ndh-5 exons 1 and 2 encoded region spans residues 1–239 (MYLSIIILPL…HVWLPMAMEG (239 aa)). Positions 240–545 (FFSRAFLKLH…NNINKSDYNK (306 aa)) are ndh-5 intron 2 encoded.

The protein in the N-terminal section; belongs to the complex I subunit 5 family. This sequence in the C-terminal section; belongs to the LAGLIDADG endonuclease family.

The protein localises to the mitochondrion membrane. Functionally, mitochondrial DNA endonuclease involved in intron homing. The polypeptide is Probable intron-encoded endonuclease 4 (Neurospora crassa (strain ATCC 24698 / 74-OR23-1A / CBS 708.71 / DSM 1257 / FGSC 987)).